We begin with the raw amino-acid sequence, 171 residues long: Cytochrome c oxidase subunit 5, mitochondrial (171 aa).

The transit peptide at 1–27 (MLRTPTVSALVRNVAVRAAKPTMAVRA) directs the protein to the mitochondrion. Residues 28–100 (ASTMPISNPT…ALPPPGEQKK (73 aa)) lie on the Mitochondrial matrix side of the membrane. Residues 101-123 (VLAYTVAGVFLSFVIFATMRAFA) form a helical membrane-spanning segment. The Mitochondrial intermembrane portion of the chain corresponds to 124 to 171 (KPPPATMTKEWQEATNEFLKAQKSDPLTGLTSEGYNGKGHVQSPSASA). The interval 145–171 (QKSDPLTGLTSEGYNGKGHVQSPSASA) is disordered.

It belongs to the cytochrome c oxidase IV family. In terms of assembly, component of the cytochrome c oxidase (complex IV, CIV), a multisubunit enzyme composed of 11 subunits. The complex is composed of a catalytic core of 3 subunits Cox1, Cox2 and Cox3, encoded in the mitochondrial DNA, and 8 supernumerary subunits Cox4, Cox5a/Cox5, Cox6, Cox7, Cox8, Cox7a/Cox9, Cox6b/Cox12 and Cox6a/Cox13, which are encoded in the nuclear genome. The complex exists as a monomer or a dimer and forms respiratory supercomplexes (SCs) in the inner mitochondrial membrane with NADH-ubiquinone oxidoreductase (complex I, CI) and ubiquinol-cytochrome c oxidoreductase (cytochrome b-c1 complex, complex III, CIII), resulting in various different assemblies (supercomplexes I(1)IV(1), I(1)III(3)IV(2), III(2)IV(1) and III(2)IV(2) as well as larger supercomplexes of compositions like I(1)III(2)IV(5-6)).

It localises to the mitochondrion inner membrane. It functions in the pathway energy metabolism; oxidative phosphorylation. In terms of biological role, component of the cytochrome c oxidase, the last enzyme in the mitochondrial electron transport chain which drives oxidative phosphorylation. The respiratory chain contains 3 multisubunit complexes succinate dehydrogenase (complex II, CII), ubiquinol-cytochrome c oxidoreductase (cytochrome b-c1 complex, complex III, CIII) and cytochrome c oxidase (complex IV, CIV), that cooperate to transfer electrons derived from NADH and succinate to molecular oxygen, creating an electrochemical gradient over the inner membrane that drives transmembrane transport and the ATP synthase. Cytochrome c oxidase is the component of the respiratory chain that catalyzes the reduction of oxygen to water. Electrons originating from reduced cytochrome c in the intermembrane space (IMS) are transferred via the dinuclear copper A center (CU(A)) of Cox2 and heme A of Cox1 to the active site in Cox1, a binuclear center (BNC) formed by heme A3 and copper B (CU(B)). The BNC reduces molecular oxygen to 2 water molecules using 4 electrons from cytochrome c in the IMS and 4 protons from the mitochondrial matrix. This is Cytochrome c oxidase subunit 5, mitochondrial (cya-4) from Neurospora crassa (strain ATCC 24698 / 74-OR23-1A / CBS 708.71 / DSM 1257 / FGSC 987).